The following is a 271-amino-acid chain: 5-deoxy-glucuronate isomerase (271 aa).

The protein belongs to the isomerase IolB family.

It catalyses the reaction 5-deoxy-D-glucuronate = 5-dehydro-2-deoxy-D-gluconate. Its pathway is polyol metabolism; myo-inositol degradation into acetyl-CoA; acetyl-CoA from myo-inositol: step 4/7. In terms of biological role, involved in the isomerization of 5-deoxy-glucuronate (5DG) to 5-dehydro-2-deoxy-D-gluconate (DKG or 2-deoxy-5-keto-D-gluconate). The protein is 5-deoxy-glucuronate isomerase of Lacticaseibacillus casei (Lactobacillus casei).